We begin with the raw amino-acid sequence, 183 residues long: MKQRLLFIGPPGAGKGTQASRLCETHGLRHLSTGDLLRSEVSAGSALGQEAEAVMNRGELVSDDLVLAIVRSQLTALNGQGWLLDGFPRNVAQAEALEPLLGELQQSIETVVLLELDDEVLVERLLARGRADDNESVIRNRLEVYRQQTAPLIDYYQARGLLISVDAQGSVEAITTRLEASLA.

12–17 (GAGKGT) lines the ATP pocket. Residues 32–61 (STGDLLRSEVSAGSALGQEAEAVMNRGELV) form an NMP region. Residues Thr33, Arg38, 59 to 61 (ELV), 86 to 89 (GFPR), and Gln93 contribute to the AMP site. The LID stretch occupies residues 127 to 133 (ARGRADD). Arg128 is a binding site for ATP. AMP contacts are provided by Arg130 and Arg141. Gly169 provides a ligand contact to ATP.

The protein belongs to the adenylate kinase family. As to quaternary structure, monomer.

It is found in the cytoplasm. It carries out the reaction AMP + ATP = 2 ADP. The protein operates within purine metabolism; AMP biosynthesis via salvage pathway; AMP from ADP: step 1/1. Functionally, catalyzes the reversible transfer of the terminal phosphate group between ATP and AMP. Plays an important role in cellular energy homeostasis and in adenine nucleotide metabolism. This Synechococcus sp. (strain WH7803) protein is Adenylate kinase.